We begin with the raw amino-acid sequence, 158 residues long: MATEKTYPMTQEGKEKLENELEQLKTVRRKEVVERIKIARSFGDLSENSEYDAAKDEQAFVEGRITQLENMIRNAVIIEDTGEESTVVTLGKTVTFKELPDGDEEAYTIVGSAEADPFEGRISNDSPIAKSLLGKQIGEKVVIQTPGGEMQVEIISVK.

Residues 3 to 75 (TEKTYPMTQE…TQLENMIRNA (73 aa)) adopt a coiled-coil conformation.

It belongs to the GreA/GreB family.

In terms of biological role, necessary for efficient RNA polymerase transcription elongation past template-encoded arresting sites. The arresting sites in DNA have the property of trapping a certain fraction of elongating RNA polymerases that pass through, resulting in locked ternary complexes. Cleavage of the nascent transcript by cleavage factors such as GreA or GreB allows the resumption of elongation from the new 3'terminus. GreA releases sequences of 2 to 3 nucleotides. This is Transcription elongation factor GreA from Bacillus cytotoxicus (strain DSM 22905 / CIP 110041 / 391-98 / NVH 391-98).